The primary structure comprises 70 residues: Kappa-conotoxin-like Sx11.2 (70 aa).

The signal sequence occupies residues 1–26 (MMFRVTSVGCLLLVIVFLNLVVPTSA). 4 cysteine pairs are disulfide-bonded: Cys27-Cys41, Cys34-Cys46, Cys40-Cys50, and Cys45-Cys54. 3 positions are modified to 4-carboxyglutamate: Glu30, Glu35, and Glu44. At Pro53 the chain carries 4-hydroxyproline. Proline amide is present on Pro57. The propeptide occupies 61–70 (SKLQEFFRQR).

The protein belongs to the conotoxin I2 superfamily. As to expression, expressed by the venom duct.

Its subcellular location is the secreted. In terms of biological role, modulator of potassium channels, specifically up-modulates the calcium and voltage-gated BK channels, has no effect on single channel conductance, but increases the open probability of BK channels. The chain is Kappa-conotoxin-like Sx11.2 from Conus striolatus (Cone snail).